Here is a 2528-residue protein sequence, read N- to C-terminus: Squalestatin tetraketide synthase clz2 (2528 aa).

The region spanning 14 to 409 is the Ketosynthase family 3 (KS3) domain; it reads TVPIAIVGMS…GANAHVILES (396 aa). Residues C187, H291, and H331 each act as for beta-ketoacyl synthase activity in the active site. Positions 420-457 are disordered; that stretch reads VNGHHQKNGTTNGHKGANGTTNELNGTNGTANGHDITT. Residues 436–452 show a composition bias toward low complexity; sequence ANGTTNELNGTNGTANG. The malonyl-CoA:ACP transacylase (MAT) domain stretch occupies residues 538-856; sequence GAQWFAMGRE…PYLSCLLRGQ (319 aa). The N-terminal hotdog fold stretch occupies residues 925-1063; it reads HDLLGSLIPG…GRIAIELDTS (139 aa). A PKS/mFAS DH domain is found at 925 to 1239; that stretch reads HDLLGSLIPG…NQSVGQIALQ (315 aa). Residues 925 to 1239 are dehydratase (DH) domain; sequence HDLLGSLIPG…NQSVGQIALQ (315 aa). The active-site Proton acceptor; for dehydratase activity is the H957. Residues 1083-1239 form a C-terminal hotdog fold region; sequence TRSVDPSNLY…NQSVGQIALQ (157 aa). The active-site Proton donor; for dehydratase activity is the D1148. The tract at residues 1390-1590 is methyltransferase (CMet) domain; that stretch reads LYRYYTDAIK…GLDVELRDCD (201 aa). The tract at residues 1817–2130 is enoyl reductase (ER) (ER) domain; it reads GLIDTLQFSK…AGKHMGKIVI (314 aa). Positions 2153–2331 are ketoreductase (KR) domain; it reads ASYLIVGGLG…AVSIDLGMVQ (179 aa). The segment at 2408–2430 is disordered; it reads RARDAKEQSNSQGGGTDSKISPG. In terms of domain architecture, Carrier spans 2441 to 2518; sequence EAIDVVGRAI…ALATTVATKS (78 aa). The residue at position 2478 (S2478) is an O-(pantetheine 4'-phosphoryl)serine.

It participates in secondary metabolite biosynthesis. Highly reducing polyketide synthase (HR-PKS); part of the gene cluster that mediates the biosynthesis of squalestatin S1 (SQS1, also known as zaragozic acid A), a heavily oxidized fungal polyketide that offers potent cholesterol lowering activity by targeting squalene synthase (SS). SQS1 is composed of a 2,8-dioxobicyclic[3.2.1]octane-3,4,5-tricarboxyclic acid core that is connected to two lipophilic polyketide arms. These initial steps feature the priming of an unusual benzoic acid starter unit onto the highly reducing polyketide synthase clz14, followed by oxaloacetate extension and product release to generate a tricarboxylic acid containing product. The phenylalanine ammonia lyase (PAL) clz10 and the acyl-CoA ligase clz12 are involved in transforming phenylalanine into benzoyl-CoA. The citrate synthase-like protein clz17 is involved in connecting the C-alpha-carbons of the hexaketide chain and oxaloacetate to afford the tricarboxylic acid unit. The potential hydrolytic enzymes, clz11 and clz13, are in close proximity to pks2 and may participate in product release. On the other side, the tetraketide arm is synthesized by a the squalestatin tetraketide synthase clz2 and enzymatically esterified to the core in the last biosynthetic step, by the acetyltransferase clz6. The biosynthesis of the tetraketide must involve 3 rounds of chain extension. After the first and second rounds methyl-transfer occurs, and in all rounds of extension the ketoreductase and dehydratase are active. The enoyl reductase and C-MeT of clz2 are not active in the final round of extension. The acetyltransferase clz6 appears to have a broad substrate selectivity for its acyl CoA substrate, allowing the in vitro synthesis of novel squalestatins. The biosynthesis of SQS1 requires several oxidative steps likely performed by oxidoreductases clz3, clz15 and clz16. Finally, in support of the identification of the cluster as being responsible for SQS1 production, the cluster contains a gene encoding a putative squalene synthase (SS) clz20, suggesting a likely mechanism for self-resistance. The polypeptide is Squalestatin tetraketide synthase clz2 (Cochliobolus lunatus (Filamentous fungus)).